We begin with the raw amino-acid sequence, 339 residues long: EEIG family member 2 (339 aa).

The 111-residue stretch at 1–111 folds into the C2 NT-type domain; sequence MRLLDGGSFT…ILKVLISMQL (111 aa). Residue serine 197 is modified to Phosphoserine. Positions 226 to 262 are disordered; the sequence is TEPITAEPSPDPTAAAATATTTTAKEEEASEKLARCP. The segment covering 230-248 has biased composition (low complexity); it reads TAEPSPDPTAAAATATTTT. Positions 249–259 are enriched in basic and acidic residues; the sequence is AKEEEASEKLA. Serine 255, serine 267, serine 299, serine 300, and serine 329 each carry phosphoserine.

It belongs to the EEIG family. Expressed in bone marrow-derived macrophages.

This is EEIG family member 2 (Eeig2) from Mus musculus (Mouse).